We begin with the raw amino-acid sequence, 405 residues long: MTQTQYRAGPDANGLFGSFGGRYVAETLMPLVLDLAREYEAAKADPKFLEELAYFQRDYIGRPNPLYFAERLTEHCGGAKIFFKREELNHTGAHKVNNCIGQVLLAKRMGKKRLIAETGAGMHGVATATVAARFGLPCVIYMGATDIERQQANVFRMKLLGAEIVPVTAGTGTLKDAMNEALRDWVTNVEDTFYLIGTVAGPHPYPAMVRDFQSIIGKETRAQLQEKEGRLPDSLIACVGGGSNAMGLFHDFLDDASVQIIGVEAGGHGVHTDKHAASLNGGVPGVLHGNRTYLLQDDDGQITDAHSISAGLDYPGIGPEHAYLHEVKRVEYVSITDDEALDAFHATCRLEGIIPALESSHALAEAIKRAPKLPKDHLMVICLSGRGDKDMQTVMNHMAAQEKQA.

Position 95 is an N6-(pyridoxal phosphate)lysine (K95).

Belongs to the TrpB family. In terms of assembly, tetramer of two alpha and two beta chains. Pyridoxal 5'-phosphate serves as cofactor.

The catalysed reaction is (1S,2R)-1-C-(indol-3-yl)glycerol 3-phosphate + L-serine = D-glyceraldehyde 3-phosphate + L-tryptophan + H2O. It participates in amino-acid biosynthesis; L-tryptophan biosynthesis; L-tryptophan from chorismate: step 5/5. Its function is as follows. The beta subunit is responsible for the synthesis of L-tryptophan from indole and L-serine. This chain is Tryptophan synthase beta chain, found in Pseudomonas entomophila (strain L48).